A 394-amino-acid polypeptide reads, in one-letter code: Cell adhesion molecule 3 (394 aa).

The N-terminal stretch at M1–A17 is a signal peptide. The Extracellular segment spans residues A18–H326. One can recognise an Ig-like V-type domain in the interval P22–T120. 2 disulfide bridges follow: C45–C105 and C147–C204. 2 consecutive Ig-like C2-type domains span residues P128–Q223 and P228–T306. The tract at residues S217–R240 is disordered. A compositionally biased stretch (basic and acidic residues) spans A230–R240. The cysteines at positions 249 and 295 are disulfide-linked. A helical transmembrane segment spans residues A327 to L347. Over G348–I394 the chain is Cytoplasmic. The segment at A363–I394 is disordered.

It belongs to the nectin family.

It localises to the cell membrane. Its subcellular location is the cell junction. In terms of biological role, may be involved in cell-cell adhesion. In Xenopus laevis (African clawed frog), this protein is Cell adhesion molecule 3 (cadm3).